The sequence spans 110 residues: Endoribonuclease SymE (110 aa).

Residues 29–74 (SRYPDYTRIPALTMKGQWLEAAGFATGTEVDVRVMNGCIVLTAQQP) form the SpoVT-AbrB domain.

It belongs to the SymE family.

The protein localises to the cytoplasm. Involved in the degradation and recycling of damaged RNA. It is itself a target for degradation by the ATP-dependent protease Lon. The protein is Endoribonuclease SymE of Salmonella typhi.